The following is a 231-amino-acid chain: Ion-translocating oxidoreductase complex subunit E (231 aa).

6 helical membrane-spanning segments follow: residues 18–38 (ALVQ…ATNA), 39–59 (LGLG…ISTL), 63–83 (TPAE…VSAV), 86–106 (LINA…PLIV), 125–145 (ALSA…MFVL), and 182–202 (PFLL…MLAG).

The protein belongs to the NqrDE/RnfAE family. As to quaternary structure, the complex is composed of six subunits: RsxA, RsxB, RsxC, RsxD, RsxE and RsxG.

The protein resides in the cell inner membrane. Part of a membrane-bound complex that couples electron transfer with translocation of ions across the membrane. Required to maintain the reduced state of SoxR. This is Ion-translocating oxidoreductase complex subunit E from Shigella flexneri serotype 5b (strain 8401).